A 336-amino-acid polypeptide reads, in one-letter code: Gastrula zinc finger protein XlCGF57.1 (336 aa).

11 C2H2-type zinc fingers span residues 6–28 (YTCT…MKIH), 34–56 (FICT…MKTH), 62–84 (FTCT…LTIH), 90–112 (FSCT…MKTH), 118–140 (FTCT…MKTH), 146–168 (FTCT…LKIH), 174–196 (FTCT…LKIH), 202–224 (FTCT…MKIH), 230–252 (FSCT…LTMH), 258–280 (FTCT…TKIH), and 286–308 (FSCT…LKIH).

It belongs to the krueppel C2H2-type zinc-finger protein family.

It localises to the nucleus. May be involved in transcriptional regulation. In Xenopus laevis (African clawed frog), this protein is Gastrula zinc finger protein XlCGF57.1.